The sequence spans 678 residues: Glycine--tRNA ligase beta subunit (678 aa).

Belongs to the class-II aminoacyl-tRNA synthetase family. In terms of assembly, tetramer of two alpha and two beta subunits.

The protein localises to the cytoplasm. It carries out the reaction tRNA(Gly) + glycine + ATP = glycyl-tRNA(Gly) + AMP + diphosphate. This chain is Glycine--tRNA ligase beta subunit, found in Streptococcus thermophilus (strain ATCC BAA-491 / LMD-9).